A 345-amino-acid chain; its full sequence is Membrane progestin receptor alpha (345 aa).

Residues 1-74 (MAMAVAQKFN…FQRHNEAVNV (74 aa)) are Cytoplasmic-facing. A helical membrane pass occupies residues 75–95 (WTHLLAALALLLRLIGLAASV). Over 96-102 (DFREDPH) the chain is Extracellular. Residues 103–123 (ALPLFFIVLASFTYLSFSAVA) traverse the membrane as a helical segment. Residues 124–136 (HLLQAKSEFWHYS) are Cytoplasmic-facing. The chain crosses the membrane as a helical span at residues 137–157 (FFFLDYVGVAVYQFGSALAHF). Topologically, residues 158–168 (YYAIEPSWHDK) are extracellular. A helical membrane pass occupies residues 169–189 (VQAIFLPTAAFLAWLSCAGSC). Over 190–243 (YNKYSQKPGLLGRIFQEAPSALAYVLDISPVLHRIIVSPLPAEEDPALLYHKCQ) the chain is Cytoplasmic. The chain crosses the membrane as a helical span at residues 244–264 (VVFFLLAAAFFSTVMPESWFP). The Extracellular portion of the chain corresponds to 265-268 (GSCH). Residues 269–289 (IFGQGHQVFHVFLVLCTLAQL) traverse the membrane as a helical segment. The Cytoplasmic segment spans residues 290 to 315 (EAVTLDYQARRGIYEPLHARWPHNFS). The helical transmembrane segment at 316 to 336 (GLFLLTVASSSLTALLLSQLV) threads the bilayer. Residues 337–345 (RRKLHQKTK) are Extracellular-facing.

It belongs to the ADIPOR family. As to expression, detected in most adult tissues. Higher expression found in white fat and liver than brown fat and skeletal muscle.

It is found in the cell membrane. Functionally, plasma membrane progesterone (P4) receptor coupled to G proteins. Seems to act through a G(i) mediated pathway. May be involved in oocyte maturation. Involved in neurosteroid inhibition of apoptosis. Also binds dehydroepiandrosterone (DHEA), pregnanolone, pregnenolone and allopregnanolone. The chain is Membrane progestin receptor alpha from Mus musculus (Mouse).